The following is a 270-amino-acid chain: SURF1-like protein (270 aa).

2 helical membrane-spanning segments follow: residues 7–29 and 246–265; these read GFKL…VYRY and YIGT…FRYM.

The protein belongs to the SURF1 family.

The protein localises to the mitochondrion inner membrane. Its function is as follows. Probably involved in the biogenesis of the COX complex. The sequence is that of SURF1-like protein (surf1-1) from Dictyostelium discoideum (Social amoeba).